The primary structure comprises 607 residues: Arginine--tRNA ligase, cytoplasmic (607 aa).

Ala2 is modified (N-acetylalanine). Ser15 is subject to Phosphoserine. 2 interaction with tRNA regions span residues Glu59 to Trp60 and Asn106 to Gln111. Residues Glu148–Asn153, His162, Tyr347, Asp351, and Gln375 contribute to the L-arginine site. The short motif at Ser151–His162 is the 'HIGH' region element. The segment at Asp484–Ser498 is interaction with tRNA.

It belongs to the class-I aminoacyl-tRNA synthetase family. Monomer.

Its subcellular location is the cytoplasm. The protein resides in the cytosol. It carries out the reaction tRNA(Arg) + L-arginine + ATP = L-arginyl-tRNA(Arg) + AMP + diphosphate. Functionally, forms part of a macromolecular complex that catalyzes the attachment of specific amino acids to cognate tRNAs during protein synthesis. The polypeptide is Arginine--tRNA ligase, cytoplasmic (Saccharomyces cerevisiae (strain ATCC 204508 / S288c) (Baker's yeast)).